Consider the following 282-residue polypeptide: Mitochondrial outer membrane protein porin (282 aa).

It belongs to the eukaryotic mitochondrial porin family.

Its subcellular location is the mitochondrion outer membrane. Forms a channel through the cell membrane that allows diffusion of small hydrophilic molecules. The channel adopts an open conformation at low or zero membrane potential and a closed conformation at potentials above 30-40 mV. The open state has a weak anion selectivity whereas the closed state is cation-selective. In Candida albicans (strain SC5314 / ATCC MYA-2876) (Yeast), this protein is Mitochondrial outer membrane protein porin (POR1).